The chain runs to 507 residues: ATP synthase subunit alpha, chloroplastic (507 aa).

Residue 170–177 (GDRQTGKT) participates in ATP binding.

It belongs to the ATPase alpha/beta chains family. In terms of assembly, F-type ATPases have 2 components, CF(1) - the catalytic core - and CF(0) - the membrane proton channel. CF(1) has five subunits: alpha(3), beta(3), gamma(1), delta(1), epsilon(1). CF(0) has four main subunits: a, b, b' and c.

Its subcellular location is the plastid. The protein localises to the chloroplast thylakoid membrane. The enzyme catalyses ATP + H2O + 4 H(+)(in) = ADP + phosphate + 5 H(+)(out). In terms of biological role, produces ATP from ADP in the presence of a proton gradient across the membrane. The alpha chain is a regulatory subunit. The polypeptide is ATP synthase subunit alpha, chloroplastic (Amborella trichopoda).